We begin with the raw amino-acid sequence, 199 residues long: Inner membrane-spanning protein YciB (199 aa).

5 helical membrane-spanning segments follow: residues 3 to 23, 47 to 67, 76 to 96, 119 to 139, and 149 to 169; these read LLID…WGIY, VEPM…ATLL, WKPS…QLVF, LNWS…VIAY, and FKLF…AIYM. Positions 180–199 are disordered; the sequence is AAAATPDALPPPGVQQDKQP.

Belongs to the YciB family.

It localises to the cell inner membrane. In terms of biological role, plays a role in cell envelope biogenesis, maintenance of cell envelope integrity and membrane homeostasis. This is Inner membrane-spanning protein YciB from Delftia acidovorans (strain DSM 14801 / SPH-1).